Consider the following 309-residue polypeptide: Curved DNA-binding protein (309 aa).

Residues 5-69 form the J domain; that stretch reads DYYAILGVKP…ERRAEYDQLR (65 aa).

The protein localises to the cytoplasm. The protein resides in the nucleoid. Its function is as follows. DNA-binding protein that preferentially recognizes a curved DNA sequence. It is probably a functional analog of DnaJ; displays overlapping activities with DnaJ, but functions under different conditions, probably acting as a molecular chaperone in an adaptive response to environmental stresses other than heat shock. Lacks autonomous chaperone activity; binds native substrates and targets them for recognition by DnaK. Its activity is inhibited by the binding of CbpM. This Serratia proteamaculans (strain 568) protein is Curved DNA-binding protein.